A 564-amino-acid chain; its full sequence is uncharacterized protein (564 aa).

Residues 1–17 are compositionally biased toward polar residues; it reads MRRPSTASLTRTPSRAS. The tract at residues 1 to 564 is disordered; it reads MRRPSTASLT…ASTPSSEVIS (564 aa). Composition is skewed to low complexity over residues 79–97 and 114–134; these read SPRT…RASP and SPTG…ASPT. Polar residues predominate over residues 153–168; that stretch reads RSPSTASLTRTPSRAS. Positions 170–179 are enriched in low complexity; that stretch reads TRWPPRASPT. The span at 250-271 shows a compositional bias: pro residues; sequence GSPPRASPMTPPRASPRTPPRA. A compositionally biased stretch (low complexity) spans 272 to 299; sequence SPTTTPSRASLTRTPSWASPTTTPSRAS. Positions 318–351 are enriched in polar residues; sequence PTGTPSRASPTGTPSRASLTGSPSRASLTGTPSR. The span at 378 to 416 shows a compositional bias: low complexity; the sequence is RASLTGTSSTASLTRTPSRASLTRTQSSSSLTRTPSMAS. Polar residues predominate over residues 467-564; that stretch reads SRASLTRTPS…ASTPSSEVIS (98 aa).

This is an uncharacterized protein from Homo sapiens (Human).